The chain runs to 1286 residues: Galactose/N-acetyl-D-galactosamine lectin heavy subunit 2 (1286 aa).

Residues 1 to 15 (MKLLLLNILLLCCLA) form the signal peptide. Residues 16-1227 (DKLNEFSADI…NNVGAIAAAT (1212 aa)) are Extracellular-facing. N-linked (GlcNAc...) asparagine glycosylation is found at Asn-200, Asn-331, Asn-384, Asn-462, Asn-652, Asn-883, Asn-1197, and Asn-1207. The chain crosses the membrane as a helical span at residues 1228 to 1248 (TVAVVVVAVVVALIVVSIGLF). Residues 1249-1286 (KTYQLVSSAMKNAITTTNENAEYVGADNEATNAATYNG) are Cytoplasmic-facing.

Heterodimer composed of a 170 kDa heavy subunit (hgl) and a 31/35 kDa light subunit (lgl); disulfide-linked. Post-translationally, N-glycosylated.

It localises to the cell membrane. In terms of biological role, lectin which binds galactose and N-acetyl-D-galactosamine of host glycoproteins and thus mediates adhesion to host cells. Mediates adherence to host colonic mucins, an essential step for pathogenic tissue invasion. The polypeptide is Galactose/N-acetyl-D-galactosamine lectin heavy subunit 2 (Entamoeba histolytica (strain ATCC 30459 / HM-1:IMSS / ABRM)).